The primary structure comprises 340 residues: MLSGIGGQAARAAALWLTPEPAQHGTPTPTHPHSHAPPLPRTPTPSHPHSRAPPLPRAPTPTHPHSHAPPLPRTPEIHPTQTGKRYKSKPLFPNRQQKSPEFFIRANTKDPLVCGARVFHFSPPRHGLAGVVGAARDHPAPDPPLPTNTGGVPYCFPSSRVDAPCSPDHGCRDRRLRKSRAPTRVPWSNSMFPTGVIQRLFHSDAGAVGYSGGITWLPAVSGSRVRRLQPGTAARSRVAMFPVWSTRTTLRVARLPGTLPRPPRPRSSAGAEGGFLLSPSQGTDGPARGGGSGGGRGPGGGRGGPRGSRGRGGRGRGGRGGGRRGRQGGPGPTLAAPPRP.

Disordered stretches follow at residues 13–96 (AALW…PNRQ) and 254–340 (RLPG…PPRP). 2 consecutive repeat copies span residues 27–43 (PTPT…PRTP) and 59–75 (PTPT…PRTP). The segment at 27-75 (PTPTHPHSHAPPLPRTPTPSHPHSRAPPLPRAPTPTHPHSHAPPLPRTP) is 2 X 17 AA repeats. The span at 35-73 (HAPPLPRTPTPSHPHSRAPPLPRAPTPTHPHSHAPPLPR) shows a compositional bias: pro residues. Over residues 287–307 (ARGGGSGGGRGPGGGRGGPRG) the composition is skewed to gly residues. Positions 308–326 (SRGRGGRGRGGRGGGRRGR) are enriched in basic residues.

The sequence is that of Latency-related protein 1 from Human herpesvirus 1 (strain F) (HHV-1).